The following is a 594-amino-acid chain: KIF-binding protein (594 aa).

The protein belongs to the KIF-binding protein family.

The protein localises to the cytoplasm. The protein resides in the cytoskeleton. Its function is as follows. Activator of KIF1B plus-end-directed microtubule motor activity. Required for organization of axonal microtubules, and axonal outgrowth and maintenance during peripheral and central nervous system development. This chain is KIF-binding protein (Kifbp), found in Gallus gallus (Chicken).